The primary structure comprises 160 residues: Major pollen allergen Cor a 1 isoforms 5, 6, 11 and 16 (160 aa).

This sequence belongs to the BetVI family.

The polypeptide is Major pollen allergen Cor a 1 isoforms 5, 6, 11 and 16 (Corylus avellana (European hazel)).